The primary structure comprises 308 residues: Ribosomal protein L11 methyltransferase (308 aa).

Residues threonine 160, glycine 181, aspartate 203, and asparagine 245 each coordinate S-adenosyl-L-methionine.

It belongs to the methyltransferase superfamily. PrmA family.

The protein localises to the cytoplasm. It catalyses the reaction L-lysyl-[protein] + 3 S-adenosyl-L-methionine = N(6),N(6),N(6)-trimethyl-L-lysyl-[protein] + 3 S-adenosyl-L-homocysteine + 3 H(+). In terms of biological role, methylates ribosomal protein L11. This is Ribosomal protein L11 methyltransferase from Thermoanaerobacter pseudethanolicus (strain ATCC 33223 / 39E) (Clostridium thermohydrosulfuricum).